Consider the following 151-residue polypeptide: Lipoprotein signal peptidase (151 aa).

The next 2 membrane-spanning stretches (helical) occupy residues 54-74 and 83-103; these read GQMWFFYVVTTIIVGVIIYLI and LLKIALGLVLGGAIGNFIDRL. Catalysis depends on residues D110 and D125. A helical transmembrane segment spans residues 120 to 140; sequence IFNIADSALTIGVGLFLLNIL.

The protein belongs to the peptidase A8 family.

The protein resides in the cell membrane. The enzyme catalyses Release of signal peptides from bacterial membrane prolipoproteins. Hydrolyzes -Xaa-Yaa-Zaa-|-(S,diacylglyceryl)Cys-, in which Xaa is hydrophobic (preferably Leu), and Yaa (Ala or Ser) and Zaa (Gly or Ala) have small, neutral side chains.. Its pathway is protein modification; lipoprotein biosynthesis (signal peptide cleavage). Functionally, this protein specifically catalyzes the removal of signal peptides from prolipoproteins. This is Lipoprotein signal peptidase from Shouchella clausii (strain KSM-K16) (Alkalihalobacillus clausii).